The sequence spans 375 residues: Protein RecA (375 aa).

A disordered region spans residues 1-20 (MPAEMKSAASGSDPRSSGER). 79–86 (GPESSGKT) is a binding site for ATP.

This sequence belongs to the RecA family.

It localises to the cytoplasm. In terms of biological role, can catalyze the hydrolysis of ATP in the presence of single-stranded DNA, the ATP-dependent uptake of single-stranded DNA by duplex DNA, and the ATP-dependent hybridization of homologous single-stranded DNAs. It interacts with LexA causing its activation and leading to its autocatalytic cleavage. This Parasynechococcus marenigrum (strain WH8102) protein is Protein RecA.